A 457-amino-acid chain; its full sequence is MSDNPEMKPHGTSKEIVESVTDATSKAIDKLQEELHKDASESVTPVTKESTAATKESRKYNFFIRTVWTFVMISGFFITLASGHAWCIVLILGCQIATFKECIAVTSASGREKNLPLTKTLNWYLLFTTIYYLDGKSLFKFFQATFYEYPVLNFIVTNHKFICYCLYLMGFVLFVCSLRKGFLKFQFGSLCVTHMVLLLVVFQAHLIIKNVLNGLFWFLLPCGLVIVNDIFAYLCGITFGKTKLIEISPKKTLEGFLGAWFFTALASIILTRILSPYTYLTCPVEDLHTNFFSNLTCELNPVFLPQVYRLPPIFFDKVQINSITVKPIYFHALNLATFASLFAPFGGFFASGLKRTFKVKDFGHSIPGHGGITDRVDCQFIMGSFANLYYETFISEHRITVDTVLSTILMNLNDKQIIELIDILIRFLSKKGIISAKNFEKLADIFNVTKKSLTNHS.

6 helical membrane-spanning segments follow: residues 71-91 (VMIS…IVLI), 154-174 (FIVT…FVLF), 188-208 (GSLC…HLII), 214-234 (GLFW…FAYL), 255-275 (GFLG…RILS), and 330-350 (FHAL…GFFA).

This sequence belongs to the CDS family. As to quaternary structure, homodimer. It depends on Mg(2+) as a cofactor.

Its subcellular location is the endoplasmic reticulum membrane. The protein resides in the cytoplasmic vesicle. The protein localises to the secretory vesicle. The catalysed reaction is a 1,2-diacyl-sn-glycero-3-phosphate + CTP + H(+) = a CDP-1,2-diacyl-sn-glycerol + diphosphate. Its pathway is phospholipid metabolism; CDP-diacylglycerol biosynthesis; CDP-diacylglycerol from sn-glycerol 3-phosphate: step 3/3. In terms of biological role, supplies CDP-diacylglycerol, which may play an important role as both a precursor to phosphoinositide biosynthesis in the plasma membrane and as a negative effector of phosphatidylinositol 4-kinase activity, thereby exerting an effect on cell proliferation via a lipid-dependent signal transduction cascade. The chain is Phosphatidate cytidylyltransferase (CDS1) from Saccharomyces cerevisiae (strain ATCC 204508 / S288c) (Baker's yeast).